The chain runs to 807 residues: MGKKWIVFFAYLLLSSFFISSSSAGITKESPLPIGQTLSSSNGFYELGFFNFNNSQNQYVGIWFKGIIPRVVVWVANREKPVTDSTANLAISNNGSLLLFNGKHGVAWSSGEALVSNGSRAELSDTGNLIVIDNFSGRTLWQSFDHLGDTMLPSSTLKYNLATGEKQVLSSWKSYTDPSVGDFVLQITPQVPTQVLVTKGSTPYYRSGPWAKTRFTGIPLMDDTFTGPVSVQQDTNGSGSLTYLNRNDRLQRTMLTSKGTQELSWHNGTDWVLNFVAPEHSCDYYGVCGPFGLCVKSVPPKCTCFKGFVPKLIEEWKRGNWTGGCVRRTELYCQGNSTGKYANVFHPVARIKPPDFYEFASFVNVEECQKSCLHNCSCLAFAYIDGIGCLMWNQDLMDAVQFSEGGELLSIRLARSELGGNKRKKAITASIVSLSLVVIIAFVAFCFWRYRVKHNADITTDASQVSWRNDLKPQDVPGLDFFDMHTIQTATNNFSISNKLGQGGFGPVYKGKLQDGKEIAVKRLSSSSGQGKEEFMNEIVLISKLQHKNLVRILGCCIEGEEKLLIYEFMLNNSLDTFLFDSRKRLEIDWPKRLDIIQGIARGIHYLHRDSHLKVIHRDLKVSNILLDEKMNPKISDFGLARMYQGTEYQDNTRRVVGTLGYMAPEYAWTGMFSEKSDIYSFGVLMLEIISGEKISRFSYGKEEKTLIAYAWESWCDTGGIDLLDKDVADSCRPLEVERCVQIGLLCVQHQPADRPNTLELLSMLTTTSDLPPPEQPTFVVHRRDDKSSSEDLITVNEMTKSVILGR.

The N-terminal stretch at 1–24 (MGKKWIVFFAYLLLSSFFISSSSA) is a signal peptide. A Bulb-type lectin domain is found at 25 to 144 (GITKESPLPI…FSGRTLWQSF (120 aa)). The Extracellular segment spans residues 25-426 (GITKESPLPI…ELGGNKRKKA (402 aa)). Residues Asn-53, Asn-94, Asn-117, Asn-134, Asn-236, and Asn-267 are each glycosylated (N-linked (GlcNAc...) asparagine). Residues 278–314 (PEHSCDYYGVCGPFGLCVKSVPPKCTCFKGFVPKLIE) enclose the EGF-like; atypical domain. 2 cysteine pairs are disulfide-bonded: Cys-282-Cys-294 and Cys-288-Cys-302. N-linked (GlcNAc...) asparagine glycans are attached at residues Asn-320, Asn-336, and Asn-375. A PAN domain is found at 333–413 (CQGNSTGKYA…EGGELLSIRL (81 aa)). Cystine bridges form between Cys-368-Cys-389 and Cys-372-Cys-378. Residues 427-447 (ITASIVSLSLVVIIAFVAFCF) form a helical membrane-spanning segment. At 448 to 807 (WRYRVKHNAD…EMTKSVILGR (360 aa)) the chain is on the cytoplasmic side. Residues 494–779 (FSISNKLGQG…DLPPPEQPTF (286 aa)) enclose the Protein kinase domain. ATP contacts are provided by residues 500-508 (LGQGGFGPV) and Lys-522. 2 positions are modified to phosphoserine: Ser-528 and Ser-543. The segment at 583 to 600 (RKRLEIDWPKRLDIIQGI) is caM-binding. Asp-619 functions as the Proton acceptor in the catalytic mechanism. 2 positions are modified to phosphoserine: Ser-623 and Ser-636. Thr-653 is subject to Phosphothreonine. Residues Ser-696 and Ser-790 each carry the phosphoserine modification.

This sequence belongs to the protein kinase superfamily. Ser/Thr protein kinase family.

The protein localises to the cell membrane. The enzyme catalyses L-seryl-[protein] + ATP = O-phospho-L-seryl-[protein] + ADP + H(+). It carries out the reaction L-threonyl-[protein] + ATP = O-phospho-L-threonyl-[protein] + ADP + H(+). This chain is G-type lectin S-receptor-like serine/threonine-protein kinase At1g61420, found in Arabidopsis thaliana (Mouse-ear cress).